Reading from the N-terminus, the 1014-residue chain is C2 domain-containing protein 5 (1014 aa).

Positions 1 to 109 (MPGKLKVKIV…EAATVISGWF (109 aa)) constitute a C2 domain. 6 residues coordinate Ca(2+): aspartate 19, aspartate 26, aspartate 76, aspartate 78, serine 81, and aspartate 84. 4 disordered regions span residues 274 to 328 (LNPN…GRDG), 639 to 669 (ETVGSPIPEPRQRTRLLRSQSESSDEAAELD), 801 to 878 (ALQV…HRGG), and 992 to 1014 (EAGPGQPTAPGPQSAGVGGDSAT). Over residues 275 to 292 (NPNTHSSGPSTPLKNQTY) the composition is skewed to polar residues. Residues 293–318 (SFSPSKSFSRQSSSSDTDLSLTPKTG) show a composition bias toward low complexity. Gly residues predominate over residues 319–328 (MGSGSAGRDG). Polar residues predominate over residues 830–840 (SSDSPGPSTFS). A compositionally biased stretch (low complexity) spans 993–1006 (AGPGQPTAPGPQSA).

Requires Ca(2+) as cofactor.

The protein resides in the cytoplasmic vesicle membrane. The protein localises to the cytoplasm. It localises to the cell cortex. It is found in the cell membrane. Its subcellular location is the cell projection. The protein resides in the ruffle. Its function is as follows. May be required for insulin-stimulated glucose transport and glucose transporter SLC2A4/GLUT4 translocation from intracellular glucose storage vesicle (GSV) to the plasma membrane (PM) in adipocytes. May bind phospholipid membranes in a calcium-dependent manner. The sequence is that of C2 domain-containing protein 5 (c2cd5) from Xenopus tropicalis (Western clawed frog).